The primary structure comprises 182 residues: Doublesex- and mab-3-related transcription factor C1 (182 aa).

Threonine 15 bears the Phosphoserine mark. Residues 26 to 39 show a composition bias toward polar residues; it reads AQVDTATQEESSQG. Disordered stretches follow at residues 26 to 48 and 136 to 174; these read AQVDTATQEESSQGPVLLNQHPE and QTRHQPCGMPGTAGERGLQLANPSMPPRPTSSGSLPSGH.

Belongs to the DMRT family. As to expression, expressed in Sertoli cells in male testis.

This is Doublesex- and mab-3-related transcription factor C1 (Dmrtc1) from Mus musculus (Mouse).